A 261-amino-acid polypeptide reads, in one-letter code: Probable RNA-binding protein ARP1 (261 aa).

Positions 17 to 94 (TKVFVGGLAW…RRANCNLASL (78 aa)) constitute an RRM domain. A disordered region spans residues 96 to 122 (GRLRKSPTMTSPQQGPKNGNRATPPHV). The segment covering 102-116 (PTMTSPQQGPKNGNR) has biased composition (polar residues).

In terms of tissue distribution, expressed in vasculature of leaves, roots and siliques.

The protein resides in the nucleus. In terms of biological role, probable RNA-binding protein involved in the regulation of abscisic acid (ABA) response during seed germination. May regulate transcript levels of several germination-responsive genes under ABA. This chain is Probable RNA-binding protein ARP1, found in Arabidopsis thaliana (Mouse-ear cress).